Consider the following 527-residue polypeptide: Probable serine/threonine-protein kinase DDB_G0271538 (527 aa).

Residues 1–10 are compositionally biased toward basic and acidic residues; it reads MNINFSKDDI. Positions 1-24 are disordered; the sequence is MNINFSKDDITGLPKSTKEEDEND. Residues 33-294 enclose the Protein kinase domain; it reads LFMDVEIGRG…KIVVEGLKVL (262 aa). ATP contacts are provided by residues 39 to 47 and Lys-60; that span reads IGRGSFGQV. Catalysis depends on Asp-156, which acts as the Proton acceptor. Disordered stretches follow at residues 304-375, 422-452, and 485-527; these read VKGK…ISGS, FTPPPNSKSMMDLKQSSAVDEDEDEDEDDVP, and TALD…KKKL. The segment covering 313–324 has biased composition (acidic residues); the sequence is DPDEDSFIDPND. The span at 325–359 shows a compositional bias: low complexity; the sequence is DSNNNNNSENNNNNNDNSNENNENNNENNNNSNEN. A compositionally biased stretch (acidic residues) spans 440-452; it reads VDEDEDEDEDDVP. Basic residues predominate over residues 512–527; it reads PKKKPNNKNKKKKKKL.

It belongs to the protein kinase superfamily. TKL Ser/Thr protein kinase family.

It carries out the reaction L-seryl-[protein] + ATP = O-phospho-L-seryl-[protein] + ADP + H(+). It catalyses the reaction L-threonyl-[protein] + ATP = O-phospho-L-threonyl-[protein] + ADP + H(+). The chain is Probable serine/threonine-protein kinase DDB_G0271538 from Dictyostelium discoideum (Social amoeba).